Here is a 288-residue protein sequence, read N- to C-terminus: NAD kinase (288 aa).

Catalysis depends on Asp70, which acts as the Proton acceptor. Residues 70–71 (DG), 144–145 (ND), Arg155, Lys172, Asp174, 185–190 (TGYSLS), and Gln245 each bind NAD(+).

It belongs to the NAD kinase family. A divalent metal cation is required as a cofactor.

Its subcellular location is the cytoplasm. It catalyses the reaction NAD(+) + ATP = ADP + NADP(+) + H(+). In terms of biological role, involved in the regulation of the intracellular balance of NAD and NADP, and is a key enzyme in the biosynthesis of NADP. Catalyzes specifically the phosphorylation on 2'-hydroxyl of the adenosine moiety of NAD to yield NADP. The chain is NAD kinase from Geobacter sp. (strain M21).